Consider the following 410-residue polypeptide: Multifunctional CCA protein (410 aa).

The ATP site is built by glycine 8 and arginine 11. Positions 8 and 11 each coordinate CTP. The Mg(2+) site is built by aspartate 21 and aspartate 23. ATP contacts are provided by arginine 91, arginine 138, and arginine 141. Positions 91, 138, and 141 each coordinate CTP. The HD domain occupies 229–347; it reads TGIHQEMVSD…AQLALVCEAD (119 aa).

This sequence belongs to the tRNA nucleotidyltransferase/poly(A) polymerase family. Bacterial CCA-adding enzyme type 1 subfamily. In terms of assembly, monomer. Can also form homodimers and oligomers. Mg(2+) is required as a cofactor. Ni(2+) serves as cofactor.

The enzyme catalyses a tRNA precursor + 2 CTP + ATP = a tRNA with a 3' CCA end + 3 diphosphate. It carries out the reaction a tRNA with a 3' CCA end + 2 CTP + ATP = a tRNA with a 3' CCACCA end + 3 diphosphate. Catalyzes the addition and repair of the essential 3'-terminal CCA sequence in tRNAs without using a nucleic acid template. Adds these three nucleotides in the order of C, C, and A to the tRNA nucleotide-73, using CTP and ATP as substrates and producing inorganic pyrophosphate. tRNA 3'-terminal CCA addition is required both for tRNA processing and repair. Also involved in tRNA surveillance by mediating tandem CCA addition to generate a CCACCA at the 3' terminus of unstable tRNAs. While stable tRNAs receive only 3'-terminal CCA, unstable tRNAs are marked with CCACCA and rapidly degraded. The sequence is that of Multifunctional CCA protein from Xanthomonas axonopodis pv. citri (strain 306).